The sequence spans 335 residues: DNA-directed RNA polymerase subunit alpha (335 aa).

The segment at 1-231 (MVREKITVST…DLLIPFLHTK (231 aa)) is alpha N-terminal domain (alpha-NTD). Residues 263–335 (KKMALKSIFI…FVIDLPKNKF (73 aa)) are alpha C-terminal domain (alpha-CTD).

The protein belongs to the RNA polymerase alpha chain family. In terms of assembly, in plastids the minimal PEP RNA polymerase catalytic core is composed of four subunits: alpha, beta, beta', and beta''. When a (nuclear-encoded) sigma factor is associated with the core the holoenzyme is formed, which can initiate transcription.

It localises to the plastid. The protein resides in the chloroplast. The catalysed reaction is RNA(n) + a ribonucleoside 5'-triphosphate = RNA(n+1) + diphosphate. Functionally, DNA-dependent RNA polymerase catalyzes the transcription of DNA into RNA using the four ribonucleoside triphosphates as substrates. The chain is DNA-directed RNA polymerase subunit alpha from Helianthus annuus (Common sunflower).